Reading from the N-terminus, the 625-residue chain is Grainyhead-like protein 2 homolog (625 aa).

Disordered stretches follow at residues 1-24 (MSQE…PPFN), 82-112 (VSKA…GGEN), and 428-453 (EERK…SDGK). The transcription activation stretch occupies residues 1-93 (MSQESDNNKR…KASDSQEDQE (93 aa)). Polar residues-rich tracts occupy residues 98 to 109 (LGTSEAQSNLSG) and 440 to 451 (QASQTQCNSSSD). A Grh/CP2 DB domain is found at 244 to 482 (SSGTFQYTLE…DLHSQPVLFI (239 aa)).

Belongs to the grh/CP2 family. Grainyhead subfamily. Homodimer, also forms heterodimers with GRHL1 or GRHL3. As to expression, expressed in keratinocytes (at protein level). Highly expressed in placenta, prostate, brain and kidney. Lower-level expression in a variety of epithelial tissues such as thymus, lung, salivary gland, mammary gland and digestive tract. Expressed in the cochlear. Expressed in corneal epithelial cells, but not in the endothelium or stroma.

It is found in the nucleus. The protein resides in the membrane. Its function is as follows. Transcription factor playing an important role in primary neurulation and in epithelial development. Binds directly to the consensus DNA sequence 5'-AACCGGTT-3' acting as an activator and repressor on distinct target genes. During embryogenesis, plays unique and cooperative roles with GRHL3 in establishing distinct zones of primary neurulation. Essential for closure 3 (rostral end of the forebrain), functions cooperatively with GRHL3 in closure 2 (forebrain/midbrain boundary) and posterior neuropore closure. Regulates epithelial morphogenesis acting as a target gene-associated transcriptional activator of apical junctional complex components. Up-regulates of CLDN3 and CLDN4, as well as of RAB25, which increases the CLDN4 protein and its localization at tight junctions. Comprises an essential component of the transcriptional machinery that establishes appropriate expression levels of CLDN4 and CDH1 in different types of epithelia. Exhibits functional redundancy with GRHL3 in epidermal morphogenetic events and epidermal wound repair. In lung, forms a regulatory loop with NKX2-1 that coordinates lung epithelial cell morphogenesis and differentiation. In keratinocytes, plays a role in telomerase activation during cellular proliferation, regulates TERT expression by binding to TERT promoter region and inhibiting DNA methylation at the 5'-CpG island, possibly by interfering with DNMT1 enzyme activity. In addition, impairs keratinocyte differentiation and epidermal function by inhibiting the expression of genes clustered at the epidermal differentiation complex (EDC) as well as GRHL1 and GRHL3 through epigenetic mechanisms. This is Grainyhead-like protein 2 homolog (GRHL2) from Homo sapiens (Human).